Here is a 453-residue protein sequence, read N- to C-terminus: Glutamyl-tRNA(Gln) amidotransferase subunit A (453 aa).

Catalysis depends on charge relay system residues Lys-56 and Ser-131. Ser-155 functions as the Acyl-ester intermediate in the catalytic mechanism.

The protein belongs to the amidase family. GatA subfamily. As to quaternary structure, heterotrimer of A, B and C subunits.

It carries out the reaction L-glutamyl-tRNA(Gln) + L-glutamine + ATP + H2O = L-glutaminyl-tRNA(Gln) + L-glutamate + ADP + phosphate + H(+). Functionally, allows the formation of correctly charged Gln-tRNA(Gln) through the transamidation of misacylated Glu-tRNA(Gln) in organisms which lack glutaminyl-tRNA synthetase. The reaction takes place in the presence of glutamine and ATP through an activated gamma-phospho-Glu-tRNA(Gln). The polypeptide is Glutamyl-tRNA(Gln) amidotransferase subunit A (Campylobacter jejuni subsp. doylei (strain ATCC BAA-1458 / RM4099 / 269.97)).